We begin with the raw amino-acid sequence, 409 residues long: Probable plastid-lipid-associated protein 12, chloroplastic (409 aa).

Residues 1 to 55 (MVAVRFYAVEMSLPCLCPCPSSPISLSLCSPRFNLLNTTSRRLGLSRNCRTLRIS) constitute a chloroplast transit peptide.

It belongs to the PAP/fibrillin family.

It localises to the plastid. Its subcellular location is the chloroplast thylakoid. The sequence is that of Probable plastid-lipid-associated protein 12, chloroplastic (PAP12) from Arabidopsis thaliana (Mouse-ear cress).